The chain runs to 397 residues: Succinate--CoA ligase [ADP-forming] subunit beta (397 aa).

One can recognise an ATP-grasp domain in the interval 9-244; the sequence is KEIMKQYGIS…LTEEDPREVQ (236 aa). ATP is bound by residues Lys-46, 53-55, Glu-99, Leu-102, and Glu-107; that span reads GRG. Residues Asn-199 and Asp-213 each contribute to the Mg(2+) site. Substrate contacts are provided by residues Asn-264 and 321 to 323; that span reads GIM.

It belongs to the succinate/malate CoA ligase beta subunit family. Heterotetramer of two alpha and two beta subunits. Mg(2+) is required as a cofactor.

The catalysed reaction is succinate + ATP + CoA = succinyl-CoA + ADP + phosphate. The enzyme catalyses GTP + succinate + CoA = succinyl-CoA + GDP + phosphate. It participates in carbohydrate metabolism; tricarboxylic acid cycle; succinate from succinyl-CoA (ligase route): step 1/1. Succinyl-CoA synthetase functions in the citric acid cycle (TCA), coupling the hydrolysis of succinyl-CoA to the synthesis of either ATP or GTP and thus represents the only step of substrate-level phosphorylation in the TCA. The beta subunit provides nucleotide specificity of the enzyme and binds the substrate succinate, while the binding sites for coenzyme A and phosphate are found in the alpha subunit. The protein is Succinate--CoA ligase [ADP-forming] subunit beta of Alkaliphilus metalliredigens (strain QYMF).